The chain runs to 206 residues: MIASIFGKITFVGKRKIIVEANCISYWFNVKENHSFEKNLEKPRQVFCQIIKRMVTNQILEEGFAFNTLEEKEWFSKFIELNGIGSKTALNLLNNNLEEMRDYIKNSNYHALTKLTGSNSKVARALLALELYDRDDGGKRIKPNTAMANDYDEMFDTLKSLGYKPQDIQNALSKIEIKPNFDVSEVIAEVIKLMSFQNNEVTNKTA.

The domain I stretch occupies residues 1–67; sequence MIASIFGKIT…QILEEGFAFN (67 aa). The interval 68–141 is domain II; that stretch reads TLEEKEWFSK…YDRDDGGKRI (74 aa). The segment at 141-145 is flexible linker; it reads IKPNT. The interval 146-206 is domain III; it reads AMANDYDEMF…QNNEVTNKTA (61 aa).

Belongs to the RuvA family. In terms of assembly, homotetramer. Forms an RuvA(8)-RuvB(12)-Holliday junction (HJ) complex. HJ DNA is sandwiched between 2 RuvA tetramers; dsDNA enters through RuvA and exits via RuvB. An RuvB hexamer assembles on each DNA strand where it exits the tetramer. Each RuvB hexamer is contacted by two RuvA subunits (via domain III) on 2 adjacent RuvB subunits; this complex drives branch migration. In the full resolvosome a probable DNA-RuvA(4)-RuvB(12)-RuvC(2) complex forms which resolves the HJ.

The protein localises to the cytoplasm. Its function is as follows. The RuvA-RuvB-RuvC complex processes Holliday junction (HJ) DNA during genetic recombination and DNA repair, while the RuvA-RuvB complex plays an important role in the rescue of blocked DNA replication forks via replication fork reversal (RFR). RuvA specifically binds to HJ cruciform DNA, conferring on it an open structure. The RuvB hexamer acts as an ATP-dependent pump, pulling dsDNA into and through the RuvAB complex. HJ branch migration allows RuvC to scan DNA until it finds its consensus sequence, where it cleaves and resolves the cruciform DNA. This is Holliday junction branch migration complex subunit RuvA from Mycoplasma pneumoniae (strain ATCC 29342 / M129 / Subtype 1) (Mycoplasmoides pneumoniae).